A 448-amino-acid chain; its full sequence is MAEPRQEFDVMEDHAQGDYTLQDQEGDMDPGLKESPLQTPADDGSEEPGSETSDAKSTPTAEDATAPLVDEGAPGEQAAAQAPAEIPEGTAAEEAGIGDTSNLEDQAAGHVTQARMVSKGKDGTGPDDKKTKGADGKPGTKIATPRGAAPPGQKGQANATRIPAKTTPTPKTSPATMQVQKKPPPAGAKSERGESGKSGDRSGYSSPGSPGTPGSRSRTPSLPTPPTREPKKVAVVRTPPKSPSAAKSRLQAAPGPMPDLKNVKSKIGSTENLKHQPGGGKVQIINKKLDLSNVQSKCGSKDNIKHVPGGGSVQIVYKPVDLSKVTSKCGSLGNIHHKPGGGQVEVKSEKLDFKDRVQSKIGSLDNITHVPGGGNKKIETHKLTFRENAKAKTDHGAEIVYKSPVVSGDTSPRHLSNVSSTGSIDMVDSPQLATLADEVSASLAKQGL.

A compositionally biased stretch (basic and acidic residues) spans 1-16 (MAEPRQEFDVMEDHAQ). The disordered stretch occupies residues 1–264 (MAEPRQEFDV…GPMPDLKNVK (264 aa)). The residue at position 2 (Ala-2) is an N-acetylalanine. Tyr-19 is subject to Phosphotyrosine. Lys-33 participates in a covalent cross-link: Glycyl lysine isopeptide (Lys-Gly) (interchain with G-Cter in ubiquitin). Phosphoserine occurs at positions 35 and 50. A compositionally biased stretch (polar residues) spans 50–60 (SETSDAKSTPT). 2 positions are modified to phosphothreonine: Thr-58 and Thr-60. The span at 71–89 (EGAPGEQAAAQAPAEIPEG) shows a compositional bias: low complexity. The residue at position 100 (Thr-100) is a Phosphothreonine. The segment covering 119 to 135 (KGKDGTGPDDKKTKGAD) has biased composition (basic and acidic residues). Thr-144 carries the post-translational modification Phosphothreonine. Arg-146 carries the omega-N-methylarginine modification. Position 154 is an N6,N6-dimethyllysine; alternate (Lys-154). The residue at position 154 (Lys-154) is an N6-acetyllysine; alternate. 4 positions are modified to phosphothreonine: Thr-160, Thr-166, Thr-167, and Thr-172. Residues 163–176 (PAKTTPTPKTSPAT) show a composition bias toward low complexity. A compositionally biased stretch (basic and acidic residues) spans 189-200 (KSERGESGKSGD). A phosphoserine mark is found at Ser-198 and Ser-202. Low complexity predominate over residues 201 to 221 (RSGYSSPGSPGTPGSRSRTPS). Phosphotyrosine is present on Tyr-204. Residues Ser-205, Ser-206, and Ser-209 each carry the phosphoserine modification. Thr-212 and Thr-219 each carry phosphothreonine. At Ser-221 the chain carries Phosphoserine. Phosphothreonine is present on Thr-224. Position 232 is an N6-acetyllysine (Lys-232). Thr-238 is modified (phosphothreonine). A phosphoserine mark is found at Ser-242 and Ser-244. 4 Tau/MAP repeats span residues 251–281 (QAAPGPMPDLKNVKSKIGSTENLKHQPGGGK), 282–312 (VQIINKKLDLSNVQSKCGSKDNIKHVPGGGS), 313–343 (VQIVYKPVDLSKVTSKCGSLGNIHHKPGGGQ), and 344–375 (VEVKSEKLDFKDRVQSKIGSLDNITHVPGGGN). Lys-261 is covalently cross-linked (Glycyl lysine isopeptide (Lys-Gly) (interchain with G-Cter in ubiquitin)). At Lys-266 the chain carries N6-acetyllysine; alternate. Lys-266 bears the N6-methyllysine; alternate mark. Lys-266 is covalently cross-linked (Glycyl lysine isopeptide (Lys-Gly) (interchain with G-Cter in ubiquitin); alternate). A Phosphoserine modification is found at Ser-269. Residue Lys-274 forms a Glycyl lysine isopeptide (Lys-Gly) (interchain with G-Cter in ubiquitin) linkage. Lys-288 is modified (N6-acetyllysine; alternate). Residue Lys-288 forms a Glycyl lysine isopeptide (Lys-Gly) (interchain with G-Cter in ubiquitin); alternate linkage. Residues Ser-292 and Ser-296 each carry the phosphoserine modification. Lys-297 carries the N6-acetyllysine modification. Residues Cys-298 and Cys-329 are joined by a disulfide bond. A Phosphoserine modification is found at Ser-300. At Lys-305 the chain carries N6-acetyllysine; alternate. A Glycyl lysine isopeptide (Lys-Gly) (interchain with G-Cter in ubiquitin); alternate cross-link involves residue Lys-305. A Phosphoserine modification is found at Ser-312. Position 318 is an N6,N6-dimethyllysine; alternate (Lys-318). 3 positions are modified to N6-acetyllysine; alternate: Lys-318, Lys-324, and Lys-328. Residues Lys-318, Lys-324, and Lys-328 each participate in a glycyl lysine isopeptide (Lys-Gly) (interchain with G-Cter in ubiquitin); alternate cross-link. The residue at position 331 (Ser-331) is a Phosphoserine. 3 positions are modified to N6-acetyllysine; alternate: Lys-338, Lys-350, and Lys-354. Glycyl lysine isopeptide (Lys-Gly) (interchain with G-Cter in ubiquitin); alternate cross-links involve residues Lys-338, Lys-350, and Lys-354. An Omega-N-methylarginine modification is found at Arg-356. Phosphoserine is present on Ser-359. A Glycyl lysine isopeptide (Lys-Gly) (interchain with G-Cter in ubiquitin) cross-link involves residue Lys-360. Position 363 is a phosphoserine (Ser-363). Lys-376 bears the N6-acetyllysine; alternate mark. Residue Lys-376 forms a Glycyl lysine isopeptide (Lys-Gly) (interchain with G-Cter in ubiquitin); alternate linkage. Lys-382 is covalently cross-linked (Glycyl lysine isopeptide (Lys-Gly) (interchain with G-Cter in ubiquitin)). Position 392 is an N6-acetyllysine; alternate (Lys-392). Residue Lys-392 forms a Glycyl lysine isopeptide (Lys-Gly) (interchain with G-Cter in ubiquitin); alternate linkage. Tyr-401 carries the phosphotyrosine modification. Residues Ser-403 and Ser-407 each carry the phosphoserine modification. Positions 405 to 424 (VVSGDTSPRHLSNVSSTGSI) are disordered. Positions 408–423 (GDTSPRHLSNVSSTGS) are enriched in polar residues. Thr-410 carries the post-translational modification Phosphothreonine. Phosphoserine is present on residues Ser-411, Ser-416, Ser-423, and Ser-429. Thr-434 carries the post-translational modification Phosphothreonine.

In terms of assembly, interacts with MARK1, MARK2, MARK3 and MARK4. Interacts with SQSTM1 when polyubiquitinated. Interacts with PSMC2 through SQSTM1. Interacts with FKBP4. Binds to CSNK1D. Interacts with SGK1. Interacts with PIN1. Interacts with LRRK2. Interacts with LRP1, leading to endocytosis; this interaction is reduced in the presence of LRPAP1/RAP. Post-translationally, polyubiquitinated. Requires functional TRAF6 and may provoke SQSTM1-dependent degradation by the proteasome. In terms of processing, phosphorylation at various serine and threonine residues in S-P or T-P motifs by proline-directed protein kinases (PDPK1, CDK1, CDK5, GSK3, MAPK) (a few sites per protein in interphase, more in mitosis), and at serine residues in K-X-G-S motifs by MAP/microtubule affinity-regulating kinase (MARK1, MARK2, MARK3, MARK4), causing detachment from microtubules, and their disassembly. Phosphorylation at Ser-269 by BRSK1 and BRSK2 in neurons affects ability to bind microtubules and plays a role in neuron polarization. Phosphorylated by PHK. Dephosphorylation at several serine and threonine residues by the serine/threonine phosphatase PPP5C. O-glycosylated; contains at least 4 GlcNAc. Site-specific or stoichiometric changes in glycosylation may modulate tau function and also play a role in PHF's formation. Expressed in neurons.

Its subcellular location is the cytoplasm. The protein resides in the cytosol. The protein localises to the cell membrane. It localises to the cytoskeleton. It is found in the cell projection. Its subcellular location is the axon. The protein resides in the dendrite. The protein localises to the secreted. Functionally, promotes microtubule assembly and stability, and might be involved in the establishment and maintenance of neuronal polarity. The C-terminus binds axonal microtubules while the N-terminus binds neural plasma membrane components, suggesting that tau functions as a linker protein between both. Axonal polarity is predetermined by tau localization (in the neuronal cell) in the domain of the cell body defined by the centrosome. The short isoforms allow plasticity of the cytoskeleton whereas the longer isoforms may preferentially play a role in its stabilization. This is Microtubule-associated protein tau (MAPT) from Bos taurus (Bovine).